The primary structure comprises 397 residues: Ribosomal RNA large subunit methyltransferase I (397 aa).

Positions 2-80 (AIRIKLKPGR…KEEAIDADFF (79 aa)) constitute a PUA domain.

It belongs to the methyltransferase superfamily. RlmI family.

The protein resides in the cytoplasm. It catalyses the reaction cytidine(1962) in 23S rRNA + S-adenosyl-L-methionine = 5-methylcytidine(1962) in 23S rRNA + S-adenosyl-L-homocysteine + H(+). Functionally, specifically methylates the cytosine at position 1962 (m5C1962) of 23S rRNA. The sequence is that of Ribosomal RNA large subunit methyltransferase I from Shewanella denitrificans (strain OS217 / ATCC BAA-1090 / DSM 15013).